Reading from the N-terminus, the 117-residue chain is UPF0342 protein LBUL_1430 (117 aa).

The protein belongs to the UPF0342 family.

The sequence is that of UPF0342 protein LBUL_1430 from Lactobacillus delbrueckii subsp. bulgaricus (strain ATCC BAA-365 / Lb-18).